The primary structure comprises 613 residues: Glucose-6-phosphate isomerase 1, chloroplastic (613 aa).

A compositionally biased stretch (low complexity) spans 1-14; it reads MASLSGLYSSSPSL. Positions 1 to 21 are disordered; the sequence is MASLSGLYSSSPSLKPAKNHS. The transit peptide at 1-48 directs the protein to the chloroplast; it reads MASLSGLYSSSPSLKPAKNHSFKALPAQSRDSFSFPHTSKPTNLPLTL. Residue glutamate 392 is the Proton donor of the active site. Residues histidine 421 and lysine 526 contribute to the active site. At serine 595 the chain carries Phosphoserine.

It belongs to the GPI family.

The protein resides in the plastid. Its subcellular location is the chloroplast stroma. It carries out the reaction alpha-D-glucose 6-phosphate = beta-D-fructose 6-phosphate. Its pathway is carbohydrate degradation; glycolysis; D-glyceraldehyde 3-phosphate and glycerone phosphate from D-glucose: step 2/4. The protein operates within carbohydrate biosynthesis; gluconeogenesis. Inhibited by glycerol-3-P (G3P). Functionally, promotes the synthesis of starch in leaves. This is Glucose-6-phosphate isomerase 1, chloroplastic (PGI1) from Arabidopsis thaliana (Mouse-ear cress).